We begin with the raw amino-acid sequence, 323 residues long: tRNA U34 carboxymethyltransferase (323 aa).

Carboxy-S-adenosyl-L-methionine-binding positions include K91, W105, K110, G130, 152 to 154, 181 to 182, M196, Y200, and R315; these read DPT and IE.

It belongs to the class I-like SAM-binding methyltransferase superfamily. CmoB family. As to quaternary structure, homotetramer.

The catalysed reaction is carboxy-S-adenosyl-L-methionine + 5-hydroxyuridine(34) in tRNA = 5-carboxymethoxyuridine(34) in tRNA + S-adenosyl-L-homocysteine + H(+). Functionally, catalyzes carboxymethyl transfer from carboxy-S-adenosyl-L-methionine (Cx-SAM) to 5-hydroxyuridine (ho5U) to form 5-carboxymethoxyuridine (cmo5U) at position 34 in tRNAs. The sequence is that of tRNA U34 carboxymethyltransferase from Escherichia coli O6:H1 (strain CFT073 / ATCC 700928 / UPEC).